A 206-amino-acid chain; its full sequence is Small ribosomal subunit protein uS4 (206 aa).

Residues 96 to 156 (QRLDNVVYRM…EKSKTQARII (61 aa)) form the S4 RNA-binding domain.

Belongs to the universal ribosomal protein uS4 family. In terms of assembly, part of the 30S ribosomal subunit. Contacts protein S5. The interaction surface between S4 and S5 is involved in control of translational fidelity.

Its function is as follows. One of the primary rRNA binding proteins, it binds directly to 16S rRNA where it nucleates assembly of the body of the 30S subunit. With S5 and S12 plays an important role in translational accuracy. This Pseudoalteromonas translucida (strain TAC 125) protein is Small ribosomal subunit protein uS4.